A 256-amino-acid polypeptide reads, in one-letter code: Enolase-phosphatase E1 (256 aa).

2 residues coordinate Mg(2+): Asp-13 and Glu-15. Residues 127–128 (SS) and Lys-175 contribute to the substrate site. Asp-202 contacts Mg(2+).

This sequence belongs to the HAD-like hydrolase superfamily. MasA/MtnC family. As to quaternary structure, monomer. It depends on Mg(2+) as a cofactor.

The protein localises to the cytoplasm. Its subcellular location is the nucleus. The enzyme catalyses 5-methylsulfanyl-2,3-dioxopentyl phosphate + H2O = 1,2-dihydroxy-5-(methylsulfanyl)pent-1-en-3-one + phosphate. It functions in the pathway amino-acid biosynthesis; L-methionine biosynthesis via salvage pathway; L-methionine from S-methyl-5-thio-alpha-D-ribose 1-phosphate: step 3/6. The protein operates within amino-acid biosynthesis; L-methionine biosynthesis via salvage pathway; L-methionine from S-methyl-5-thio-alpha-D-ribose 1-phosphate: step 4/6. Its function is as follows. Bifunctional enzyme that catalyzes the enolization of 2,3-diketo-5-methylthiopentyl-1-phosphate (DK-MTP-1-P) into the intermediate 2-hydroxy-3-keto-5-methylthiopentenyl-1-phosphate (HK-MTPenyl-1-P), which is then dephosphorylated to form the acireductone 1,2-dihydroxy-3-keto-5-methylthiopentene (DHK-MTPene). This Botryotinia fuckeliana (strain B05.10) (Noble rot fungus) protein is Enolase-phosphatase E1 (utr4).